The primary structure comprises 116 residues: Large ribosomal subunit protein bL19 (116 aa).

This sequence belongs to the bacterial ribosomal protein bL19 family.

In terms of biological role, this protein is located at the 30S-50S ribosomal subunit interface and may play a role in the structure and function of the aminoacyl-tRNA binding site. The chain is Large ribosomal subunit protein bL19 from Nocardioides sp. (strain ATCC BAA-499 / JS614).